The primary structure comprises 357 residues: uncharacterized protein (357 aa).

One copy of the HEAT repeat lies at 173 to 211 (VLPILEKLMQDESLYVRKSVANNLNDISKTHPHLLRKVA).

This is an uncharacterized protein from Bacillus subtilis (strain 168).